Consider the following 439-residue polypeptide: Choline monooxygenase, chloroplastic (439 aa).

The transit peptide at 1 to 60 directs the protein to the chloroplast; it reads MMAASASATTMLLKYPTTVCGIPNPSSNNNNDPSNNIVSIPQNTTNPTLKSRTPNKITTN. Residues 24–41 show a composition bias toward low complexity; that stretch reads NPSSNNNNDPSNNIVSIP. A disordered region spans residues 24 to 54; that stretch reads NPSSNNNNDPSNNIVSIPQNTTNPTLKSRTP. The segment covering 42-54 has biased composition (polar residues); it reads QNTTNPTLKSRTP. One can recognise a Rieske domain in the interval 120–227; the sequence is WQVAGISDQI…VAVWGPFVLI (108 aa). Residues C162, H164, C181, and H184 each coordinate [2Fe-2S] cluster. Residues H287 and H292 each contribute to the Fe cation site.

As to quaternary structure, homotrimer or homodimer. [2Fe-2S] cluster is required as a cofactor. Requires Fe cation as cofactor. The cofactor is Mg(2+). Expressed in leaves.

It is found in the plastid. The protein localises to the chloroplast stroma. The enzyme catalyses choline + 2 reduced [2Fe-2S]-[ferredoxin] + O2 + 2 H(+) = betaine aldehyde hydrate + 2 oxidized [2Fe-2S]-[ferredoxin] + H2O. It participates in amine and polyamine biosynthesis; betaine biosynthesis via choline pathway; betaine aldehyde from choline (monooxygenase route): step 1/1. Catalyzes the first step of the osmoprotectant glycine betaine synthesis. This is Choline monooxygenase, chloroplastic (CMO) from Spinacia oleracea (Spinach).